We begin with the raw amino-acid sequence, 636 residues long: MGKVVGIDLGTTNSCVAVMEGGKPTVIANAEGFRTTPSVVGYAKNGDRLVGQIAKRQAVMNPGNTFYSVKRFIGRKFDEITNEATEVAYSVVKDGNGNVKLDCPAQGKQFAPEEISAQVLRKLVDDASKYLGETVTQAVITVPAYFNDSQRQATKDAGKIAGIEVLRIINEPTAASLAYGLDKKDNETILVFDLGGGTFDVSILEVGEGVFEVLATSGDTHLGGDDFDKKIVDFLAGEFQKAEGIDLRKDKQALQRLTEAAEKAKIELSGVSQTEINLPFITATQDGPKHLDTTLSRAKFEEICSDLIDRCGIPVENAIRDAKIDKSALDEIVLVGGSTRIPAVQEVVKKILGKDPNQGVNPDEVVAVGAAIQGGVLSGEVKDILLLDVSPLSLGVETLGGVMTKIIPRNTTIPTKKSETFSTAVDGQSNVEIHVLQGEREMANDNKSLGTFRLDGIPPAPRGVPQIEVTFDIDANGILNVTAKDRGTGKEQSISITGASTLPDTEVDRMVKEAESNAAADKERREKIDRKNQADSLVYQAEKQITELGDKVPAADKIKAEGLIKDLKEAVAQEDDAKIQTVMPELQQVLYSIGSNMYQQAGAEAGVGAPGAGPEAGTSSGGGDDVIDAEFSEPEK.

Threonine 198 carries the phosphothreonine; by autocatalysis modification. Positions glutamate 604–threonine 618 are enriched in low complexity. Positions glutamate 604 to lysine 636 are disordered. A compositionally biased stretch (acidic residues) spans aspartate 625–lysine 636.

It belongs to the heat shock protein 70 family.

In terms of biological role, acts as a chaperone. The protein is Chaperone protein DnaK2 (dnaK2) of Synechocystis sp. (strain ATCC 27184 / PCC 6803 / Kazusa).